The sequence spans 322 residues: Phosphatidylserine decarboxylase proenzyme (322 aa).

Residues Asp-90, His-147, and Ser-254 each act as charge relay system; for autoendoproteolytic cleavage activity in the active site. Residue Ser-254 is the Schiff-base intermediate with substrate; via pyruvic acid; for decarboxylase activity of the active site. Ser-254 carries the pyruvic acid (Ser); by autocatalysis modification.

The protein belongs to the phosphatidylserine decarboxylase family. PSD-B subfamily. Prokaryotic type I sub-subfamily. Heterodimer of a large membrane-associated beta subunit and a small pyruvoyl-containing alpha subunit. Requires pyruvate as cofactor. Post-translationally, is synthesized initially as an inactive proenzyme. Formation of the active enzyme involves a self-maturation process in which the active site pyruvoyl group is generated from an internal serine residue via an autocatalytic post-translational modification. Two non-identical subunits are generated from the proenzyme in this reaction, and the pyruvate is formed at the N-terminus of the alpha chain, which is derived from the carboxyl end of the proenzyme. The autoendoproteolytic cleavage occurs by a canonical serine protease mechanism, in which the side chain hydroxyl group of the serine supplies its oxygen atom to form the C-terminus of the beta chain, while the remainder of the serine residue undergoes an oxidative deamination to produce ammonia and the pyruvoyl prosthetic group on the alpha chain. During this reaction, the Ser that is part of the protease active site of the proenzyme becomes the pyruvoyl prosthetic group, which constitutes an essential element of the active site of the mature decarboxylase.

The protein resides in the cell membrane. The enzyme catalyses a 1,2-diacyl-sn-glycero-3-phospho-L-serine + H(+) = a 1,2-diacyl-sn-glycero-3-phosphoethanolamine + CO2. Its pathway is phospholipid metabolism; phosphatidylethanolamine biosynthesis; phosphatidylethanolamine from CDP-diacylglycerol: step 2/2. In terms of biological role, catalyzes the formation of phosphatidylethanolamine (PtdEtn) from phosphatidylserine (PtdSer). This is Phosphatidylserine decarboxylase proenzyme from Shigella dysenteriae serotype 1 (strain Sd197).